We begin with the raw amino-acid sequence, 128 residues long: Holo-[acyl-carrier-protein] synthase (128 aa).

Mg(2+) contacts are provided by D7 and E55.

The protein belongs to the P-Pant transferase superfamily. AcpS family. The cofactor is Mg(2+).

It is found in the cytoplasm. The catalysed reaction is apo-[ACP] + CoA = holo-[ACP] + adenosine 3',5'-bisphosphate + H(+). In terms of biological role, transfers the 4'-phosphopantetheine moiety from coenzyme A to a Ser of acyl-carrier-protein. This Moorella thermoacetica (strain ATCC 39073 / JCM 9320) protein is Holo-[acyl-carrier-protein] synthase.